Here is a 441-residue protein sequence, read N- to C-terminus: tRNA-2-methylthio-N(6)-dimethylallyladenosine synthase (441 aa).

The MTTase N-terminal domain maps to 5-121 (KKLYLETFGC…LQGMVAAAEE (117 aa)). 6 residues coordinate [4Fe-4S] cluster: Cys-14, Cys-50, Cys-84, Cys-159, Cys-163, and Cys-166. In terms of domain architecture, Radical SAM core spans 145–375 (AEGGVTRFVT…QAAQKKTTLA (231 aa)). The region spanning 378–440 (RSLEGTVQKV…QTLLKGEIVH (63 aa)) is the TRAM domain.

It belongs to the methylthiotransferase family. MiaB subfamily. In terms of assembly, monomer. The cofactor is [4Fe-4S] cluster.

The protein resides in the cytoplasm. The catalysed reaction is N(6)-dimethylallyladenosine(37) in tRNA + (sulfur carrier)-SH + AH2 + 2 S-adenosyl-L-methionine = 2-methylsulfanyl-N(6)-dimethylallyladenosine(37) in tRNA + (sulfur carrier)-H + 5'-deoxyadenosine + L-methionine + A + S-adenosyl-L-homocysteine + 2 H(+). Catalyzes the methylthiolation of N6-(dimethylallyl)adenosine (i(6)A), leading to the formation of 2-methylthio-N6-(dimethylallyl)adenosine (ms(2)i(6)A) at position 37 in tRNAs that read codons beginning with uridine. This is tRNA-2-methylthio-N(6)-dimethylallyladenosine synthase from Citrifermentans bemidjiense (strain ATCC BAA-1014 / DSM 16622 / JCM 12645 / Bem) (Geobacter bemidjiensis).